The primary structure comprises 232 residues: Large ribosomal subunit protein uL1 (232 aa).

Belongs to the universal ribosomal protein uL1 family. In terms of assembly, part of the 50S ribosomal subunit.

Its function is as follows. Binds directly to 23S rRNA. The L1 stalk is quite mobile in the ribosome, and is involved in E site tRNA release. In terms of biological role, protein L1 is also a translational repressor protein, it controls the translation of the L11 operon by binding to its mRNA. This Coxiella burnetii (strain RSA 331 / Henzerling II) protein is Large ribosomal subunit protein uL1.